The chain runs to 810 residues: F-BAR domain only protein 2 (810 aa).

The F-BAR domain occupies 3–250 (MAYFVENFWG…NMANTTVESL (248 aa)). Positions 3-274 (MAYFVENFWG…PGLIEFEECD (272 aa)) are mediates dimerization and binding to membranes enriched in Pi(4,5)-P2 and induces their tubulation. Residues 87–156 (HLDLVRKLQE…CVEQERLKKE (70 aa)) are a coiled coil. A Glycyl lysine isopeptide (Lys-Gly) (interchain with G-Cter in SUMO2) cross-link involves residue K297. The disordered stretch occupies residues 301–352 (DAESVECPDADSLNIPDVDEEGYSIKPETNQNDTKENHFYSSSDSDSEDEEP). S312 is modified (phosphoserine). Phosphothreonine is present on T385. Residues S387, S394, and S403 each carry the phosphoserine modification. The interval 403-537 (SNEELTKSKP…VSRGPSPVSL (135 aa)) is disordered. Residues 433-456 (PSLDSSSSSSLTSSSSARPTTPLS) are compositionally biased toward low complexity. 7 positions are modified to phosphoserine: S488, S493, S496, S508, S510, S511, and S533. Low complexity predominate over residues 502–521 (PLARAESSSSISSSASLSAA). The interval 521–810 (ANTPTVGVSR…FATGRYLADC (290 aa)) is mediates interaction with DAB2, EPS15, EPS15R and ITSN1. The MHD domain maps to 542–809 (TLPVAVALTE…RFATGRYLAD (268 aa)).

This sequence belongs to the FCHO family. As to quaternary structure, homodimer; disulfide-linked. May form homotetramer. Interacts with AP2A1. Interacts with EPS15, EPS15R, ITSN1 and ITSN2; recruit those scaffolding proteins which in turn may interact with the adaptor protein complex AP-2 at the plasma membrane. Interacts with DAB2 (via DPF motifs); mediates LDL receptor/LDLR endocytosis. Post-translationally, ubiquitinated. Mainly undergoes monoubiquitination but also polyubiquitination.

Its subcellular location is the membrane. The protein resides in the clathrin-coated pit. In terms of biological role, functions in an early step of clathrin-mediated endocytosis. Has both a membrane binding/bending activity and the ability to recruit proteins essential to the formation of functional clathrin-coated pits. Has a lipid-binding activity with a preference for membranes enriched in phosphatidylserine and phosphoinositides (Pi(4,5) biphosphate) like the plasma membrane. Its membrane-bending activity might be important for the subsequent action of clathrin and adaptors in the formation of clathrin-coated vesicles. Involved in adaptor protein complex AP-2-dependent endocytosis of the transferrin receptor, it also functions in the AP-2-independent endocytosis of the LDL receptor. The protein is F-BAR domain only protein 2 (FCHO2) of Pongo abelii (Sumatran orangutan).